The primary structure comprises 111 residues: Fertilization-influencing membrane protein (111 aa).

The first 23 residues, 1 to 23, serve as a signal peptide directing secretion; that stretch reads MKLWLWVAVGVWMLMAELGTIET. Residues 85–105 form a helical membrane-spanning segment; the sequence is ILVGTLVVAFFFLLFQFCLHV.

Testis-specific.

The protein resides in the cell membrane. It is found in the secreted. Functionally, plays a role in sperm-oocyte fusion process during fertilization. In Mus musculus (Mouse), this protein is Fertilization-influencing membrane protein.